A 985-amino-acid chain; its full sequence is Cation channel sperm-associated auxiliary subunit epsilon (985 aa).

A signal peptide spans 1-35; that stretch reads MPSAGQRKPGSLLALQALQKWLLRGGVGAMLARQV. Over 36–937 the chain is Extracellular; it reads VAALLLWLSC…ESLGMIPRSS (902 aa). Intrachain disulfides connect cysteine 87–cysteine 101, cysteine 130–cysteine 235, cysteine 275–cysteine 365, and cysteine 439–cysteine 442. N-linked (GlcNAc...) asparagine glycosylation is found at asparagine 91, asparagine 143, and asparagine 292. Residues asparagine 502, asparagine 517, and asparagine 565 are each glycosylated (N-linked (GlcNAc...) asparagine). Disulfide bonds link cysteine 617-cysteine 724, cysteine 737-cysteine 919, cysteine 753-cysteine 786, and cysteine 838-cysteine 869. N-linked (GlcNAc...) asparagine glycosylation occurs at asparagine 749. The N-linked (GlcNAc...) asparagine glycan is linked to asparagine 830. Residues asparagine 888, asparagine 915, and asparagine 920 are each glycosylated (N-linked (GlcNAc...) asparagine). Residues 938-958 form a helical membrane-spanning segment; the sequence is VYLVAALIFVLMLTFISILVL. The Cytoplasmic portion of the chain corresponds to 959 to 985; that stretch reads SYFWYLKIYRQFIIEPLHKRPAKQKKN.

This sequence belongs to the CATSPERD family. In terms of assembly, component of the CatSper complex or CatSpermasome composed of the core pore-forming members CATSPER1, CATSPER2, CATSPER3 and CATSPER4 as well as auxiliary members CATSPERB, CATSPERG2, CATSPERD, CATSPERE, CATSPERZ, C2CD6/CATSPERT, SLCO6C1, TMEM249, TMEM262 and EFCAB9. HSPA1 may be an additional auxiliary complex member. The core complex members CATSPER1, CATSPER2, CATSPER3 and CATSPER4 form a heterotetrameric channel. The auxiliary CATSPERB, CATSPERG2, CATSPERD and CATSPERE subunits form a pavilion-like structure over the pore which stabilizes the complex through interactions with CATSPER4, CATSPER3, CATSPER1 and CATSPER2 respectively. SLCO6C1 interacts with CATSPERE and TMEM262/CATSPERH interacts with CATSPERB, further stabilizing the complex. C2CD6/CATSPERT interacts at least with CATSPERD and is required for targeting the CatSper complex in the flagellar membrane. In terms of tissue distribution, testis-specific.

The protein localises to the cell projection. Its subcellular location is the cilium. The protein resides in the flagellum membrane. Functionally, auxiliary component of the CatSper complex, a complex involved in sperm cell hyperactivation. Sperm cell hyperactivation is needed for sperm motility which is essential late in the preparation of sperm for fertilization. This is Cation channel sperm-associated auxiliary subunit epsilon from Mus musculus (Mouse).